The following is a 197-amino-acid chain: MQKIVLATGNPGKVRELANLLADFGLDVVAQTELGVESAEETGLTFIENAILKARHAAQTTGLPAIADDSGLAVDALGGAPGIYSARYAGTDASDQENLEKLLVALQNVPDEKRGAQFHCVLVYMRHAEDPTPLVFHGQWPGVIAHQPAGAAGFGYDPIFYVPALGKTAAELTREEKHAVSHRGQALKLMLDALRDA.

8 to 13 is a binding site for substrate; that stretch reads TGNPGK. Mg(2+)-binding residues include E40 and D69. Catalysis depends on D69, which acts as the Proton acceptor. Residues S70, 154-157, K177, and 182-183 contribute to the substrate site; these read FGYD and HR.

This sequence belongs to the HAM1 NTPase family. In terms of assembly, homodimer. The cofactor is Mg(2+).

It catalyses the reaction XTP + H2O = XMP + diphosphate + H(+). It carries out the reaction dITP + H2O = dIMP + diphosphate + H(+). The enzyme catalyses ITP + H2O = IMP + diphosphate + H(+). Its function is as follows. Pyrophosphatase that catalyzes the hydrolysis of nucleoside triphosphates to their monophosphate derivatives, with a high preference for the non-canonical purine nucleotides XTP (xanthosine triphosphate), dITP (deoxyinosine triphosphate) and ITP. Seems to function as a house-cleaning enzyme that removes non-canonical purine nucleotides from the nucleotide pool, thus preventing their incorporation into DNA/RNA and avoiding chromosomal lesions. The sequence is that of dITP/XTP pyrophosphatase from Yersinia pestis.